Here is a 637-residue protein sequence, read N- to C-terminus: Chloride intracellular channel protein 6 (637 aa).

A disordered region spans residues 1 to 400 (MAETAEPEGG…EASEEGDPGQ (400 aa)). Residues 35–63 (GPEASEGAAKAPSGEGAGAAAKAGATEEA) show a composition bias toward low complexity. A Phosphoserine modification is found at Ser-39. Residues 126–137 (CELRGEAAREAE) show a composition bias toward basic and acidic residues. Residues 138 to 152 (GQAAAPAAPGAQEEA) are compositionally biased toward low complexity. 15 repeat units span residues 155 to 160 (GDSVDA), 161 to 166 (EGSIDA), 167 to 172 (GGSVDA), 173 to 178 (AGSVDA), 179 to 184 (GGSIDA), 185 to 190 (GGSMDA), 191 to 196 (GGSVDA), 197 to 202 (GGSIDT), 203 to 208 (GGSVDA), 209 to 214 (AGSVDA), 215 to 220 (GGSIDT), 221 to 226 (GRNVDA), 227 to 232 (GGSIDA), 233 to 238 (GGSVDA), and 239 to 244 (GGSMDA). The segment at 155-244 (GDSVDAEGSI…SVDAGGSMDA (90 aa)) is 15 X 6 AA tandem repeat of [GEA]-[DGR]-[SN]-[VIM]-D-[AT]. The span at 247–256 (PAGGAHGAGG) shows a compositional bias: gly residues. Residues 305–314 (GSEDAAGEDG) are compositionally biased toward acidic residues. Residues 315–332 (DQGRPQEETEQQAERQEP) are compositionally biased toward basic and acidic residues. Ser-348 and Ser-393 each carry phosphoserine. A G-site motif is present at residues 420-423 (CPFS). The chain crosses the membrane as a helical span at residues 422-442 (FSQRLFMILWLKGVIFNVTTV). Residues 466 to 637 (DGDVKTDVNK…AYSDVAKRMK (172 aa)) form the GST C-terminal domain.

Belongs to the chloride channel CLIC family. Monomer (soluble state). Interacts with dopamine receptors DRD2, DRD3 and DRD4. Phosphorylated. In terms of tissue distribution, expressed in brain, chorioretinal, lacrimal glands, submandibular glands, airway epithelium, kidney and gastric mucosa, where it is preferentially expressed in cells that secrete or transport water. In brain, it is highly expressed in choroid plexus. Not detected in pancreas, adrenal glands, heart, skeletal muscle, ileal mucosa, liver and lung.

It localises to the cytoplasm. The protein resides in the cell membrane. The enzyme catalyses chloride(in) = chloride(out). Its activity is regulated as follows. Channel activity is redox- and pH-regulated. Inhibited by IAA-94. In terms of biological role, in the soluble state, catalyzes glutaredoxin-like thiol disulfide exchange reactions with reduced glutathione as electron donor. Can insert into membranes and form voltage-dependent chloride-selective channels. The channel opens upon membrane depolarization at positive voltages and closes at negative membrane voltages. May play a critical role in water-secreting cells, possibly through the regulation of chloride ion transport. The polypeptide is Chloride intracellular channel protein 6 (CLIC6) (Oryctolagus cuniculus (Rabbit)).